The following is a 183-amino-acid chain: Caspase recruitment domain-containing protein 19 (183 aa).

Cys7 and Cys77 are joined by a disulfide. The 92-residue stretch at 8-99 folds into the CARD domain; sequence DRLVQDTPFL…PLHSHLPSRY (92 aa). The chain crosses the membrane as a helical span at residues 122-142; it reads GPMSFLAGLGLAAGLALLLYC.

Associates with BCL10 by CARD-CARD interaction.

The protein resides in the endoplasmic reticulum membrane. It localises to the mitochondrion membrane. Functionally, plays a role in inhibiting the effects of BCL10-induced activation of NF-kappa-B. This chain is Caspase recruitment domain-containing protein 19, found in Mus musculus (Mouse).